The sequence spans 54 residues: Light-harvesting protein B-800/850 alpha chain (54 aa).

Over 1–14 (MTNGKIWLVVKPTV) the chain is Cytoplasmic. The helical transmembrane segment at 15-35 (GVPLFLSAAVIASVVIHAAVL) threads the bilayer. His31 is an a bacteriochlorophyll binding site. The Periplasmic portion of the chain corresponds to 36–54 (TTTTWLPAYYQGSAAVAAE).

Belongs to the antenna complex alpha subunit family. As to quaternary structure, the core complex is formed by different alpha and beta chains, binding bacteriochlorophyll molecules, and arranged most probably in tetrameric structures disposed around the reaction center. The non-pigmented gamma chains may constitute additional components.

It is found in the cell inner membrane. Its function is as follows. Antenna complexes are light-harvesting systems, which transfer the excitation energy to the reaction centers. The chain is Light-harvesting protein B-800/850 alpha chain (pucA) from Cereibacter sphaeroides (Rhodobacter sphaeroides).